Here is a 201-residue protein sequence, read N- to C-terminus: Phospholipase A2 inhibitor NAI (201 aa).

The N-terminal stretch at 1–19 (MKSLQIICLLFVLVARGSC) is a signal peptide. 8 disulfide bridges follow: cysteine 22/cysteine 47, cysteine 25/cysteine 32, cysteine 40/cysteine 68, cysteine 74/cysteine 95, cysteine 96/cysteine 101, cysteine 119/cysteine 144, cysteine 137/cysteine 166, and cysteine 170/cysteine 191. N-linked (GlcNAc...) asparagine glycosylation occurs at asparagine 176.

It belongs to the CNF-like-inhibitor family. In terms of assembly, heterotrimer of 2 subunits A and 1 subunit B; non-covalently linked. N-glycosylated, probably by biantennary structure. Glycosylation does not change PLA2 inhibitory activity. In terms of tissue distribution, expressed by the liver.

The protein localises to the secreted. Functionally, inhibits the enzymatic activity of all phospholipase A2 tested, binding them with micromole to nanomole affinity. The sequence is that of Phospholipase A2 inhibitor NAI from Notechis ater (Black tiger snake).